We begin with the raw amino-acid sequence, 292 residues long: Syntaxin-19 (292 aa).

A compositionally biased stretch (basic and acidic residues) spans 1-24 (MKDRLPELKQRTKETELSKDKDVP). Residues 1–28 (MKDRLPELKQRTKETELSKDKDVPTTEA) are disordered. The stretch at 46–122 (VAERHLHEIQ…VKEVKKSEDE (77 aa)) forms a coiled coil. A t-SNARE coiled-coil homology domain is found at 209–271 (LSEIEQRHKE…NTTKEKFGLA (63 aa)).

Belongs to the syntaxin family. As to quaternary structure, interacts with EGFR.

The protein resides in the cell membrane. It localises to the cytoplasm. Plays a role in endosomal trafficking of the epidermal growth factor receptor (EGFR). The protein is Syntaxin-19 (STX19) of Bos taurus (Bovine).